A 558-amino-acid chain; its full sequence is N-terminal histidine N-methyltransferase (558 aa).

The Cytoplasmic portion of the chain corresponds to 1-15 (MAPFRSIYEKDATKK). The helical transmembrane segment at 16-32 (LVVGAALLVLAAFYSYV) threads the bilayer. Over 33-49 (FLLTLAPVYGSTPSHIF) the chain is Lumenal. A helical membrane pass occupies residues 50–65 (HGYGVGIAGVAGWFSK). Over 66–77 (DIVDRVSGRKAI) the chain is Cytoplasmic. A helical transmembrane segment spans residues 78–96 (YAIPVLAFFLPVVQYFVSQ). Residues 97-104 (QSSALGNP) lie on the Lumenal side of the membrane. The helical transmembrane segment at 105 to 131 (AGPIFTEVLALYPLVLLSVACAGKLVQ) threads the bilayer. Topologically, residues 132–145 (AGLNLQRHGDLVAE) are cytoplasmic. The helical transmembrane segment at 146–169 (HIPLLGSYVIYSAGEHLIKAFLSR) threads the bilayer. The Lumenal segment spans residues 170–172 (FIG). Residues 173–194 (STVLLSRAGLQILIAIFYAAAV) traverse the membrane as a helical segment. The Cytoplasmic segment spans residues 195 to 197 (PSK). Residues 198–215 (ALLLAIPAFLFSVTSNTH) form a helical membrane-spanning segment. Residues 216–558 (LPLGHTTTAL…VLPDRVWEGW (343 aa)) lie on the Lumenal side of the membrane.

It belongs to the methyltransferase superfamily.

It localises to the endoplasmic reticulum membrane. It catalyses the reaction L-histidyl-[protein] + S-adenosyl-L-methionine = N(tele)-methyl-L-histidyl-[protein] + S-adenosyl-L-homocysteine + H(+). Protein-histidine N-methyltransferase that specifically mediates 3-methylhistidine (tele-methylhistidine) methylation at 'His-1', which protects the side-chain from oxidative damage. Methylates lytic polysaccharide monooxygenases (LPMOs) destined for secretion, including AN4702. The sequence is that of N-terminal histidine N-methyltransferase from Emericella nidulans (strain FGSC A4 / ATCC 38163 / CBS 112.46 / NRRL 194 / M139) (Aspergillus nidulans).